We begin with the raw amino-acid sequence, 112 residues long: Low molecular weight protein antigen 6 (112 aa).

The protein localises to the secreted. This chain is Low molecular weight protein antigen 6 (cfp6), found in Mycobacterium bovis (strain ATCC BAA-935 / AF2122/97).